Reading from the N-terminus, the 218-residue chain is Guanylate kinase (218 aa).

In terms of domain architecture, Guanylate kinase-like spans 14–193 (GLMLVLSSPS…AFAEVRGIVV (180 aa)). ATP is bound at residue 21–28 (SPSGAGKS).

Belongs to the guanylate kinase family.

The protein resides in the cytoplasm. The catalysed reaction is GMP + ATP = GDP + ADP. Its function is as follows. Essential for recycling GMP and indirectly, cGMP. This is Guanylate kinase (gmk) from Mesorhizobium japonicum (strain LMG 29417 / CECT 9101 / MAFF 303099) (Mesorhizobium loti (strain MAFF 303099)).